Consider the following 66-residue polypeptide: Large ribosomal subunit protein uL29 (66 aa).

It belongs to the universal ribosomal protein uL29 family.

In Caldanaerobacter subterraneus subsp. tengcongensis (strain DSM 15242 / JCM 11007 / NBRC 100824 / MB4) (Thermoanaerobacter tengcongensis), this protein is Large ribosomal subunit protein uL29.